We begin with the raw amino-acid sequence, 289 residues long: Bis(5'-nucleosyl)-tetraphosphatase, symmetrical (289 aa).

Belongs to the Ap4A hydrolase family.

It carries out the reaction P(1),P(4)-bis(5'-adenosyl) tetraphosphate + H2O = 2 ADP + 2 H(+). Its function is as follows. Hydrolyzes diadenosine 5',5'''-P1,P4-tetraphosphate to yield ADP. The sequence is that of Bis(5'-nucleosyl)-tetraphosphatase, symmetrical from Yersinia pseudotuberculosis serotype O:3 (strain YPIII).